Consider the following 463-residue polypeptide: Asparagine--tRNA ligase (463 aa).

Belongs to the class-II aminoacyl-tRNA synthetase family. As to quaternary structure, homodimer.

The protein resides in the cytoplasm. The enzyme catalyses tRNA(Asn) + L-asparagine + ATP = L-asparaginyl-tRNA(Asn) + AMP + diphosphate + H(+). The chain is Asparagine--tRNA ligase from Bacillus cytotoxicus (strain DSM 22905 / CIP 110041 / 391-98 / NVH 391-98).